Reading from the N-terminus, the 473-residue chain is tRNA-2-methylthio-N(6)-dimethylallyladenosine synthase (473 aa).

The region spanning 3 to 120 (MKLHVKTWGC…LPEMIKEVQE (118 aa)) is the MTTase N-terminal domain. 6 residues coordinate [4Fe-4S] cluster: cysteine 12, cysteine 49, cysteine 83, cysteine 157, cysteine 161, and cysteine 164. Positions 143 to 375 (KADGATAFVS…QDRIQQQSQG (233 aa)) constitute a Radical SAM core domain. The region spanning 378–441 (RKMVGSVQRI…TNSIRGKFIR (64 aa)) is the TRAM domain.

Belongs to the methylthiotransferase family. MiaB subfamily. In terms of assembly, monomer. Requires [4Fe-4S] cluster as cofactor.

The protein resides in the cytoplasm. It carries out the reaction N(6)-dimethylallyladenosine(37) in tRNA + (sulfur carrier)-SH + AH2 + 2 S-adenosyl-L-methionine = 2-methylsulfanyl-N(6)-dimethylallyladenosine(37) in tRNA + (sulfur carrier)-H + 5'-deoxyadenosine + L-methionine + A + S-adenosyl-L-homocysteine + 2 H(+). In terms of biological role, catalyzes the methylthiolation of N6-(dimethylallyl)adenosine (i(6)A), leading to the formation of 2-methylthio-N6-(dimethylallyl)adenosine (ms(2)i(6)A) at position 37 in tRNAs that read codons beginning with uridine. The sequence is that of tRNA-2-methylthio-N(6)-dimethylallyladenosine synthase from Psychromonas ingrahamii (strain DSM 17664 / CCUG 51855 / 37).